A 430-amino-acid chain; its full sequence is tRNA(Ile)-lysidine synthase (430 aa).

27 to 32 is a binding site for ATP; sequence SGGSDS.

This sequence belongs to the tRNA(Ile)-lysidine synthase family.

The protein localises to the cytoplasm. It catalyses the reaction cytidine(34) in tRNA(Ile2) + L-lysine + ATP = lysidine(34) in tRNA(Ile2) + AMP + diphosphate + H(+). Ligates lysine onto the cytidine present at position 34 of the AUA codon-specific tRNA(Ile) that contains the anticodon CAU, in an ATP-dependent manner. Cytidine is converted to lysidine, thus changing the amino acid specificity of the tRNA from methionine to isoleucine. The chain is tRNA(Ile)-lysidine synthase from Rickettsia akari (strain Hartford).